The chain runs to 280 residues: Phosphatidylserine decarboxylase proenzyme (280 aa).

Active-site charge relay system; for autoendoproteolytic cleavage activity residues include aspartate 88, histidine 145, and serine 248. Serine 248 functions as the Schiff-base intermediate with substrate; via pyruvic acid; for decarboxylase activity in the catalytic mechanism. Serine 248 carries the pyruvic acid (Ser); by autocatalysis modification.

It belongs to the phosphatidylserine decarboxylase family. PSD-B subfamily. Prokaryotic type I sub-subfamily. As to quaternary structure, heterodimer of a large membrane-associated beta subunit and a small pyruvoyl-containing alpha subunit. The cofactor is pyruvate. Is synthesized initially as an inactive proenzyme. Formation of the active enzyme involves a self-maturation process in which the active site pyruvoyl group is generated from an internal serine residue via an autocatalytic post-translational modification. Two non-identical subunits are generated from the proenzyme in this reaction, and the pyruvate is formed at the N-terminus of the alpha chain, which is derived from the carboxyl end of the proenzyme. The autoendoproteolytic cleavage occurs by a canonical serine protease mechanism, in which the side chain hydroxyl group of the serine supplies its oxygen atom to form the C-terminus of the beta chain, while the remainder of the serine residue undergoes an oxidative deamination to produce ammonia and the pyruvoyl prosthetic group on the alpha chain. During this reaction, the Ser that is part of the protease active site of the proenzyme becomes the pyruvoyl prosthetic group, which constitutes an essential element of the active site of the mature decarboxylase.

The protein localises to the cell membrane. The enzyme catalyses a 1,2-diacyl-sn-glycero-3-phospho-L-serine + H(+) = a 1,2-diacyl-sn-glycero-3-phosphoethanolamine + CO2. Its pathway is phospholipid metabolism; phosphatidylethanolamine biosynthesis; phosphatidylethanolamine from CDP-diacylglycerol: step 2/2. In terms of biological role, catalyzes the formation of phosphatidylethanolamine (PtdEtn) from phosphatidylserine (PtdSer). The chain is Phosphatidylserine decarboxylase proenzyme from Methylobacillus flagellatus (strain ATCC 51484 / DSM 6875 / VKM B-1610 / KT).